The following is a 107-amino-acid chain: Essential MCU regulator, mitochondrial (107 aa).

The N-terminal 52 residues, 1 to 52 (MASGAARWLVLAPVRSGALRSGPSLRKDGDVSAAWSGSGRSLVPSRSVIVTR), are a transit peptide targeting the mitochondrion. The segment at 1–52 (MASGAARWLVLAPVRSGALRSGPSLRKDGDVSAAWSGSGRSLVPSRSVIVTR) is interaction with MAIP1. Over 54–65 (GAILPKPVKMSF) the chain is Mitochondrial matrix. The helical transmembrane segment at 66-85 (GLLRVFSIVIPFLYVGTLIS) threads the bilayer. A GXXXX[G/A/S] motif is present at residues 81 to 85 (GTLIS). Topologically, residues 86–107 (KNFAALLEEHDIFVPEDDDDDD) are mitochondrial intermembrane.

Belongs to the SMDT1/EMRE family. In terms of assembly, component of the uniplex complex, composed of MCU, EMRE/SMDT1, MICU1 and MICU2 (or MICU3) in a 4:4:1:1 stoichiometry. The number of EMRE/SMDT1 molecules is hovewer variable, ranging from 1 to 4 copies per uniplex complex, leading to uniplex complexes with distinct gatekeeping profiles. Interacts (via its C-terminal poly-Asp tail) with MCUR1; the interaction is direct. Unprocessed form interacts (via transit peptide) with MAIP1. In terms of processing, undergoes proteolytic degradation in neurons: degraded by AFG3L2 and SPG7 before SMDT1/EMRE assembly with the uniporter complex, limiting the availability of SMDT1/EMRE for MCU assembly and promoting efficient assembly of gatekeeper subunits with MCU.

It is found in the mitochondrion inner membrane. Functionally, essential regulatory subunit of the mitochondrial calcium uniporter complex (uniplex), a complex that mediates calcium uptake into mitochondria. Required to bridge the calcium-sensing proteins MICU1 with the calcium-conducting subunit MCU. Acts by mediating activation of MCU and retention of MICU1 to the MCU pore, in order to ensure tight regulation of the uniplex complex and appropriate responses to intracellular calcium signaling. The protein is Essential MCU regulator, mitochondrial of Homo sapiens (Human).